Consider the following 388-residue polypeptide: Succinate--CoA ligase [ADP-forming] subunit beta (388 aa).

One can recognise an ATP-grasp domain in the interval 9 to 244; the sequence is KEILRKYGVT…LDEEDPAEIE (236 aa). ATP-binding positions include K46, 53–55, E99, A102, and E107; that span reads GRG. Positions 199 and 213 each coordinate Mg(2+). Substrate is bound by residues N264 and 321–323; that span reads GIM.

The protein belongs to the succinate/malate CoA ligase beta subunit family. Heterotetramer of two alpha and two beta subunits. Mg(2+) is required as a cofactor.

It catalyses the reaction succinate + ATP + CoA = succinyl-CoA + ADP + phosphate. It carries out the reaction GTP + succinate + CoA = succinyl-CoA + GDP + phosphate. Its pathway is carbohydrate metabolism; tricarboxylic acid cycle; succinate from succinyl-CoA (ligase route): step 1/1. In terms of biological role, succinyl-CoA synthetase functions in the citric acid cycle (TCA), coupling the hydrolysis of succinyl-CoA to the synthesis of either ATP or GTP and thus represents the only step of substrate-level phosphorylation in the TCA. The beta subunit provides nucleotide specificity of the enzyme and binds the substrate succinate, while the binding sites for coenzyme A and phosphate are found in the alpha subunit. This Janthinobacterium sp. (strain Marseille) (Minibacterium massiliensis) protein is Succinate--CoA ligase [ADP-forming] subunit beta.